The primary structure comprises 257 residues: Imidazole glycerol phosphate synthase subunit HisF (257 aa).

Residues Asp12 and Asp131 contribute to the active site.

It belongs to the HisA/HisF family. As to quaternary structure, heterodimer of HisH and HisF.

It is found in the cytoplasm. It carries out the reaction 5-[(5-phospho-1-deoxy-D-ribulos-1-ylimino)methylamino]-1-(5-phospho-beta-D-ribosyl)imidazole-4-carboxamide + L-glutamine = D-erythro-1-(imidazol-4-yl)glycerol 3-phosphate + 5-amino-1-(5-phospho-beta-D-ribosyl)imidazole-4-carboxamide + L-glutamate + H(+). Its pathway is amino-acid biosynthesis; L-histidine biosynthesis; L-histidine from 5-phospho-alpha-D-ribose 1-diphosphate: step 5/9. IGPS catalyzes the conversion of PRFAR and glutamine to IGP, AICAR and glutamate. The HisF subunit catalyzes the cyclization activity that produces IGP and AICAR from PRFAR using the ammonia provided by the HisH subunit. This chain is Imidazole glycerol phosphate synthase subunit HisF, found in Burkholderia multivorans (strain ATCC 17616 / 249).